Consider the following 248-residue polypeptide: Flavodoxin/ferredoxin--NADP reductase (248 aa).

Residues 2–101 (ADWVTGKVTK…SEAAGFFVLD (100 aa)) form the FAD-binding FR-type domain. Asp17 contacts NADP(+). FAD is bound by residues 50 to 53 (RAYS), Tyr66, 74 to 76 (KLS), and Thr116. Residues 143 to 144 (AR), 173 to 174 (SR), Arg184, 214 to 216 (NPQ), and Asp220 contribute to the NADP(+) site. 247–248 (YW) provides a ligand contact to FAD.

The protein belongs to the ferredoxin--NADP reductase type 1 family. Monomer. The cofactor is FAD.

Its subcellular location is the cytoplasm. The catalysed reaction is 2 reduced [2Fe-2S]-[ferredoxin] + NADP(+) + H(+) = 2 oxidized [2Fe-2S]-[ferredoxin] + NADPH. It carries out the reaction reduced [flavodoxin] + NADP(+) = oxidized [flavodoxin] + NADPH + 2 H(+). In terms of biological role, transports electrons between flavodoxin or ferredoxin and NADPH. Reduces flavodoxin 1, flavodoxin 2 and ferredoxin, ferredoxin being the kinetically and thermodynamically preferred partner. Required for the activation of several enzymes such as pyruvate formate-lyase, anaerobic ribonucleotide reductase and cobalamin-dependent methionine synthase. This is Flavodoxin/ferredoxin--NADP reductase from Escherichia coli (strain K12).